Here is a 666-residue protein sequence, read N- to C-terminus: Long chain acyl-CoA synthetase 4 (666 aa).

228–239 (IMYTSGTTGDPK) contacts ATP. Residues 495–519 (DGWLHTGDVGEWQPDGSMKIIDRKK) form a fatty acid-binding region.

The protein belongs to the ATP-dependent AMP-binding enzyme family. Requires Mg(2+) as cofactor.

It carries out the reaction a long-chain fatty acid + ATP + CoA = a long-chain fatty acyl-CoA + AMP + diphosphate. The protein operates within lipid metabolism; fatty acid metabolism. Functionally, activation of long-chain fatty acids for both synthesis of cellular lipids, and degradation via beta-oxidation. Preferentially uses palmitate, palmitoleate, oleate and linoleate. The chain is Long chain acyl-CoA synthetase 4 (LACS4) from Arabidopsis thaliana (Mouse-ear cress).